Here is a 463-residue protein sequence, read N- to C-terminus: UDP-N-acetylmuramoylalanine--D-glutamate ligase (463 aa).

121 to 127 is a binding site for ATP; the sequence is GTNGKST.

Belongs to the MurCDEF family.

The protein localises to the cytoplasm. The enzyme catalyses UDP-N-acetyl-alpha-D-muramoyl-L-alanine + D-glutamate + ATP = UDP-N-acetyl-alpha-D-muramoyl-L-alanyl-D-glutamate + ADP + phosphate + H(+). It participates in cell wall biogenesis; peptidoglycan biosynthesis. Its function is as follows. Cell wall formation. Catalyzes the addition of glutamate to the nucleotide precursor UDP-N-acetylmuramoyl-L-alanine (UMA). The protein is UDP-N-acetylmuramoylalanine--D-glutamate ligase (murD) of Rhizobium meliloti (strain 1021) (Ensifer meliloti).